The sequence spans 335 residues: DNA-directed RNA polymerases I and III subunit RPAC1 (335 aa).

Ser-2 bears the N-acetylserine mark. Ser-17 is subject to Phosphoserine.

It belongs to the archaeal Rpo3/eukaryotic RPB3 RNA polymerase subunit family. Component of the RNA polymerase I (Pol I) complex consisting of 14 subunits: RPA135, RPA190, RPC40, RPA14, RPB5, RPO26, RPA43, RPB8, RPA12, RPB10, RPC19, RPC10, RPA49 and RPA34. The complex is composed of a horseshoe-shaped core containing ten subunits (RPA135, RPA190, RPB5, RPO26, RPB8, RPB10, RPC10, RPA12, RPC19 and RPC40) where RPA135 and RPA190 form the DNA-binding cleft. Outside of the core, RPA14 and RPA43 form the stalk that mediates interactions with transcription initiation factors and newly synthesized RNA. Component of the RNA polymerase III (Pol III) complex consisting of at least 17 subunits. Interacts with the RPC19/RPAC2 and RPC53/RPC4. Interacts with retrotransposons Ty integrase, targeting Ty1, Ty2 and Ty4 integration upstream of pol III-transcribed genes.

Its subcellular location is the nucleus. The protein localises to the nucleolus. In terms of biological role, DNA-dependent RNA polymerases catalyze the transcription of DNA into RNA using the four ribonucleoside triphosphates as substrates. Common component of RNA polymerases I (Pol I) and III (Pol III) which synthesize ribosomal RNA precursors and small RNAs, such as 5S rRNA and tRNAs, respectively. RPC40 is part of the polymerase core and may function as a clamp element that moves to open and close the cleft. Plays an important role in targeting retrotransposons Ty integration upstream of pol III-transcribed genes such as tRNA genes, allowing Ty1, Ty2 and Ty4 to proliferate and yet minimizing genetic damage. This chain is DNA-directed RNA polymerases I and III subunit RPAC1, found in Saccharomyces cerevisiae (strain ATCC 204508 / S288c) (Baker's yeast).